Reading from the N-terminus, the 105-residue chain is MVKQIESKSAFQEVLDSAGDKLVVVDFSATWCGPCKMIKPFFHALSEKFNNVVFIEVDVDDCKDIAAECEVKCMPTFQFFKKGQKVGEFSGANKEKLEATINELL.

The Thioredoxin domain occupies 2 to 105 (VKQIESKSAF…KLEATINELL (104 aa)). Lys-3 is subject to N6-acetyllysine. The residue at position 8 (Lys-8) is an N6-succinyllysine. Catalysis depends on nucleophile residues Cys-32 and Cys-35. Cys-32 and Cys-35 are disulfide-bonded. An N6-acetyllysine modification is found at Lys-39. 2 positions are modified to S-nitrosocysteine: Cys-62 and Cys-69. Position 73 is an S-nitrosocysteine; alternate (Cys-73). Lys-94 is modified (N6-acetyllysine; alternate). Lys-94 bears the N6-succinyllysine; alternate mark.

The protein belongs to the thioredoxin family. As to quaternary structure, homodimer; disulfide-linked. Interacts with TXNIP through the redox-active site. Interacts with MAP3K5 and CASP3. Interacts with APEX1; the interaction stimulates the FOS/JUN AP-1 DNA-binding activity in a redox-dependent manner. Post-translationally, in the fully reduced protein, both Cys-69 and Cys-73 are nitrosylated in response to nitric oxide (NO). When two disulfide bonds are present in the protein, only Cys-73 is nitrosylated. Cys-73 can serve as donor for nitrosylation of target proteins.

Its subcellular location is the nucleus. It localises to the cytoplasm. It is found in the secreted. In terms of biological role, participates in various redox reactions through the reversible oxidation of its active center dithiol to a disulfide and catalyzes dithiol-disulfide exchange reactions. Plays a role in the reversible S-nitrosylation of cysteine residues in target proteins, and thereby contributes to the response to intracellular nitric oxide. Nitrosylates the active site Cys of CASP3 in response to nitric oxide (NO), and thereby inhibits caspase-3 activity. Induces the FOS/JUN AP-1 DNA binding activity in ionizing radiation (IR) cells through its oxidation/reduction status and stimulates AP-1 transcriptional activity. The chain is Thioredoxin (TXN) from Oryctolagus cuniculus (Rabbit).